Reading from the N-terminus, the 182-residue chain is Heat shock protein beta-2 (182 aa).

The sHSP domain maps to 55 to 163 (PAGEGSRAGA…DTEVNEVYIS (109 aa)).

This sequence belongs to the small heat shock protein (HSP20) family. In terms of assembly, interacts with DMPK; may enhance its kinase activity. In terms of tissue distribution, expressed preferentially in skeletal muscle and heart but not in the lens.

Its subcellular location is the cytoplasm. It is found in the nucleus. Functionally, may regulate the kinase DMPK. The protein is Heat shock protein beta-2 (HSPB2) of Homo sapiens (Human).